The following is a 1304-amino-acid chain: TPR-containing protein DDB_G0280363 (1304 aa).

6 disordered regions span residues 19–85 (QQHH…HPQQ), 153–195 (NINN…NSSL), 296–334 (LPST…YTQQ), 447–477 (GFNW…QRQQ), 576–687 (QNQQ…VTTI), and 706–728 (LTTV…VESP). 3 stretches are compositionally biased toward low complexity: residues 25–44 (QQNN…QFNQ), 52–85 (HQQH…HPQQ), and 153–194 (NINN…NNSS). Residues 296–306 (LPSTNSSIVSR) show a composition bias toward polar residues. Positions 307-316 (QQQLQQQQQK) are enriched in low complexity. The span at 448–465 (FNWSPSLQPDQSTSTNHT) shows a compositional bias: polar residues. 2 stretches are compositionally biased toward low complexity: residues 466 to 477 (QAMLQQQQQRQQ) and 576 to 597 (QNQQ…PNQH). The segment covering 598–625 (HGQHQHNQHNQHHNQHHNQSHPNHKNQH) has biased composition (basic residues). Over residues 626 to 687 (QKQNQTQQST…NNNTNNVTTI (62 aa)) the composition is skewed to low complexity. TPR repeat units lie at residues 769–802 (WRVY…QPYI), 899–932 (MKHV…VEKG), 978–1011 (WKIY…CPEN), 1046–1079 (SKLR…AHVE), 1084–1111 (WKVF…KESL), 1112–1150 (KIHS…VPKS), and 1152–1184 (EVWC…TPQF).

The sequence is that of TPR-containing protein DDB_G0280363 from Dictyostelium discoideum (Social amoeba).